An 87-amino-acid polypeptide reads, in one-letter code: Cell division topological specificity factor (87 aa).

The protein belongs to the MinE family.

Prevents the cell division inhibition by proteins MinC and MinD at internal division sites while permitting inhibition at polar sites. This ensures cell division at the proper site by restricting the formation of a division septum at the midpoint of the long axis of the cell. The chain is Cell division topological specificity factor from Neisseria gonorrhoeae (strain ATCC 700825 / FA 1090).